Here is a 237-residue protein sequence, read N- to C-terminus: UPF0173 metal-dependent hydrolase BruAb2_0628 (237 aa).

The protein belongs to the UPF0173 family.

The chain is UPF0173 metal-dependent hydrolase BruAb2_0628 from Brucella abortus biovar 1 (strain 9-941).